The chain runs to 175 residues: Pycsar effector protein RsPycTM (175 aa).

The next 3 membrane-spanning stretches (helical) occupy residues 17 to 37 (AKNAALLTFCSVWMGAIITLL), 44 to 64 (PLGFDYAFKASLTVLFIAAII), and 146 to 166 (AGSLVLFAFGIMMVPPILFCI).

It localises to the cell inner membrane. Pycsar (pyrimidine cyclase system for antiphage resistance) provides immunity against bacteriophage. The pyrimidine cyclase (PycC) synthesizes cyclic nucleotides in response to infection; these serve as specific second messenger signals. The signals activate the nearby effector, leading to bacterial cell death and abortive phage infection. A clade A Pycsar system. Its function is as follows. The effector gene of a two-gene Pycsar system. Expression of this and uridylate cyclase RsPycC (AC A0A4R2TZQ0) probably confers resistance to bacteriophage. The genes are probably only expressed in response to bacteriophage infection. Probably only responds to cUMP (produced by its cognate NTP cyclase), acts by impairing membrane integrity. This chain is Pycsar effector protein RsPycTM, found in Rhizobium sp. (strain PP-F2F-G36).